Here is a 443-residue protein sequence, read N- to C-terminus: ATP-dependent protease ATPase subunit HslU (443 aa).

Residues V18, 60-65 (GVGKTE), D256, E321, and R393 contribute to the ATP site.

This sequence belongs to the ClpX chaperone family. HslU subfamily. A double ring-shaped homohexamer of HslV is capped on each side by a ring-shaped HslU homohexamer. The assembly of the HslU/HslV complex is dependent on binding of ATP.

The protein resides in the cytoplasm. Functionally, ATPase subunit of a proteasome-like degradation complex; this subunit has chaperone activity. The binding of ATP and its subsequent hydrolysis by HslU are essential for unfolding of protein substrates subsequently hydrolyzed by HslV. HslU recognizes the N-terminal part of its protein substrates and unfolds these before they are guided to HslV for hydrolysis. The chain is ATP-dependent protease ATPase subunit HslU from Azoarcus sp. (strain BH72).